A 154-amino-acid polypeptide reads, in one-letter code: Crossover junction endodeoxyribonuclease RuvC (154 aa).

Active-site residues include Asp-7, Glu-67, and Asp-139. Asp-7, Glu-67, and Asp-139 together coordinate Mg(2+).

It belongs to the RuvC family. As to quaternary structure, homodimer which binds Holliday junction (HJ) DNA. The HJ becomes 2-fold symmetrical on binding to RuvC with unstacked arms; it has a different conformation from HJ DNA in complex with RuvA. In the full resolvosome a probable DNA-RuvA(4)-RuvB(12)-RuvC(2) complex forms which resolves the HJ. It depends on Mg(2+) as a cofactor.

It localises to the cytoplasm. It catalyses the reaction Endonucleolytic cleavage at a junction such as a reciprocal single-stranded crossover between two homologous DNA duplexes (Holliday junction).. Its function is as follows. The RuvA-RuvB-RuvC complex processes Holliday junction (HJ) DNA during genetic recombination and DNA repair. Endonuclease that resolves HJ intermediates. Cleaves cruciform DNA by making single-stranded nicks across the HJ at symmetrical positions within the homologous arms, yielding a 5'-phosphate and a 3'-hydroxyl group; requires a central core of homology in the junction. The consensus cleavage sequence is 5'-(A/T)TT(C/G)-3'. Cleavage occurs on the 3'-side of the TT dinucleotide at the point of strand exchange. HJ branch migration catalyzed by RuvA-RuvB allows RuvC to scan DNA until it finds its consensus sequence, where it cleaves and resolves the cruciform DNA. The protein is Crossover junction endodeoxyribonuclease RuvC of Parasynechococcus marenigrum (strain WH8102).